We begin with the raw amino-acid sequence, 247 residues long: Probable transcriptional regulatory protein LPC_0711 (247 aa).

Belongs to the TACO1 family.

It localises to the cytoplasm. The polypeptide is Probable transcriptional regulatory protein LPC_0711 (Legionella pneumophila (strain Corby)).